The chain runs to 436 residues: Bifunctional protein GlmU (436 aa).

The pyrophosphorylase stretch occupies residues 1 to 226 (MNEISIIILA…ETNFMGINDK (226 aa)). Residues 9-12 (LAAG), Lys23, Gln75, and 82-83 (GT) each bind UDP-N-acetyl-alpha-D-glucosamine. Residue Asp105 coordinates Mg(2+). The UDP-N-acetyl-alpha-D-glucosamine site is built by Gly138, Glu152, Asn167, and Asn224. Asn224 lines the Mg(2+) pocket. The segment at 227 to 247 (FALSIAEEIMQNRIKENLMKN) is linker. The tract at residues 248 to 436 (GVIMSLPDTI…YKFFGKNDEK (189 aa)) is N-acetyltransferase. UDP-N-acetyl-alpha-D-glucosamine contacts are provided by Arg311 and Lys328. The Proton acceptor role is filled by His339. UDP-N-acetyl-alpha-D-glucosamine is bound by residues Tyr342 and Asn353. Acetyl-CoA is bound by residues 362 to 363 (NY), Ser381, Ala399, and Arg416.

The protein in the N-terminal section; belongs to the N-acetylglucosamine-1-phosphate uridyltransferase family. This sequence in the C-terminal section; belongs to the transferase hexapeptide repeat family. Homotrimer. Mg(2+) is required as a cofactor.

The protein localises to the cytoplasm. It catalyses the reaction alpha-D-glucosamine 1-phosphate + acetyl-CoA = N-acetyl-alpha-D-glucosamine 1-phosphate + CoA + H(+). The catalysed reaction is N-acetyl-alpha-D-glucosamine 1-phosphate + UTP + H(+) = UDP-N-acetyl-alpha-D-glucosamine + diphosphate. The protein operates within nucleotide-sugar biosynthesis; UDP-N-acetyl-alpha-D-glucosamine biosynthesis; N-acetyl-alpha-D-glucosamine 1-phosphate from alpha-D-glucosamine 6-phosphate (route II): step 2/2. It functions in the pathway nucleotide-sugar biosynthesis; UDP-N-acetyl-alpha-D-glucosamine biosynthesis; UDP-N-acetyl-alpha-D-glucosamine from N-acetyl-alpha-D-glucosamine 1-phosphate: step 1/1. Its pathway is bacterial outer membrane biogenesis; LPS lipid A biosynthesis. Catalyzes the last two sequential reactions in the de novo biosynthetic pathway for UDP-N-acetylglucosamine (UDP-GlcNAc). The C-terminal domain catalyzes the transfer of acetyl group from acetyl coenzyme A to glucosamine-1-phosphate (GlcN-1-P) to produce N-acetylglucosamine-1-phosphate (GlcNAc-1-P), which is converted into UDP-GlcNAc by the transfer of uridine 5-monophosphate (from uridine 5-triphosphate), a reaction catalyzed by the N-terminal domain. In Campylobacter fetus subsp. fetus (strain 82-40), this protein is Bifunctional protein GlmU.